The chain runs to 278 residues: Orotidine 5'-phosphate decarboxylase (278 aa).

Substrate contacts are provided by residues Asp-40, 62-64 (KTH), 93-102 (DRKFIDIGNT), Tyr-229, and Arg-247. Lys-95 (proton donor) is an active-site residue.

It belongs to the OMP decarboxylase family.

It carries out the reaction orotidine 5'-phosphate + H(+) = UMP + CO2. The protein operates within pyrimidine metabolism; UMP biosynthesis via de novo pathway; UMP from orotate: step 2/2. The sequence is that of Orotidine 5'-phosphate decarboxylase (pyrG) from Aspergillus fumigatus (strain ATCC MYA-4609 / CBS 101355 / FGSC A1100 / Af293) (Neosartorya fumigata).